The primary structure comprises 123 residues: ATP synthase epsilon chain (123 aa).

The protein belongs to the ATPase epsilon chain family. F-type ATPases have 2 components, CF(1) - the catalytic core - and CF(0) - the membrane proton channel. CF(1) has five subunits: alpha(3), beta(3), gamma(1), delta(1), epsilon(1). CF(0) has three main subunits: a, b and c.

It localises to the cell inner membrane. Functionally, produces ATP from ADP in the presence of a proton gradient across the membrane. This is ATP synthase epsilon chain from Helicobacter pylori (strain P12).